Consider the following 367-residue polypeptide: 4-hydroxy-3-methylbut-2-en-1-yl diphosphate synthase (flavodoxin) (367 aa).

[4Fe-4S] cluster contacts are provided by Cys-265, Cys-268, Cys-300, and Glu-307.

The protein belongs to the IspG family. The cofactor is [4Fe-4S] cluster.

The catalysed reaction is (2E)-4-hydroxy-3-methylbut-2-enyl diphosphate + oxidized [flavodoxin] + H2O + 2 H(+) = 2-C-methyl-D-erythritol 2,4-cyclic diphosphate + reduced [flavodoxin]. It participates in isoprenoid biosynthesis; isopentenyl diphosphate biosynthesis via DXP pathway; isopentenyl diphosphate from 1-deoxy-D-xylulose 5-phosphate: step 5/6. Its function is as follows. Converts 2C-methyl-D-erythritol 2,4-cyclodiphosphate (ME-2,4cPP) into 1-hydroxy-2-methyl-2-(E)-butenyl 4-diphosphate. This Bacillus anthracis protein is 4-hydroxy-3-methylbut-2-en-1-yl diphosphate synthase (flavodoxin).